Reading from the N-terminus, the 340-residue chain is MELVRELLRKIAEFENLTAEEMYNLMKEVAEGRATDAQIGALVMGTKMKGETPEEIEGAVKLFREKVVRVPVKDPEELVDVVGTGGDKSSTFNVSTVTGFVLAGAGVKVAKHGNRSVSSKSGSADFLEALGAKVELLPEKVARLIEEVGFGFMFAPLFHPAMKRVVSPRREVGVRSIFNLIGPLTNPAGVKRYLLGVFSKEYVDKFAKALKNLGVKKAFVVHGEGGIDEVSVEGETYVTEVSEEGIRSFTFSPEELGVKRKSLSEVRVNSPEESVKVALSVLRGEEGTPRDMVLLNASFGILVSERAGDIKEAFEMAKESIDSGKALEVLEKYVELSNKI.

Residues Gly-83, 86–87, Thr-91, 93–96, 111–119, and Ser-123 contribute to the 5-phospho-alpha-D-ribose 1-diphosphate site; these read GD, NVST, and KHGNRSVSS. Gly-83 provides a ligand contact to anthranilate. Residue Ser-95 coordinates Mg(2+). Asn-114 is a binding site for anthranilate. Residue Arg-169 coordinates anthranilate. Asp-228 and Glu-229 together coordinate Mg(2+).

Belongs to the anthranilate phosphoribosyltransferase family. Homodimer. Requires Mg(2+) as cofactor.

It catalyses the reaction N-(5-phospho-beta-D-ribosyl)anthranilate + diphosphate = 5-phospho-alpha-D-ribose 1-diphosphate + anthranilate. The protein operates within amino-acid biosynthesis; L-tryptophan biosynthesis; L-tryptophan from chorismate: step 2/5. In terms of biological role, catalyzes the transfer of the phosphoribosyl group of 5-phosphorylribose-1-pyrophosphate (PRPP) to anthranilate to yield N-(5'-phosphoribosyl)-anthranilate (PRA). The chain is Anthranilate phosphoribosyltransferase from Aquifex aeolicus (strain VF5).